We begin with the raw amino-acid sequence, 225 residues long: Ribonuclease 3 (225 aa).

Residues 7 to 129 (IPRLCRTLGY…IIGAVYLDSD (123 aa)) enclose the RNase III domain. Residue Glu42 participates in Mg(2+) binding. Asp46 is an active-site residue. Residues Asp115 and Glu118 each coordinate Mg(2+). Residue Glu118 is part of the active site. In terms of domain architecture, DRBM spans 155 to 225 (DPKTLLQELL…AAQALELIKR (71 aa)).

It belongs to the ribonuclease III family. Homodimer. Mg(2+) serves as cofactor.

The protein localises to the cytoplasm. The enzyme catalyses Endonucleolytic cleavage to 5'-phosphomonoester.. Its function is as follows. Digests double-stranded RNA. Involved in the processing of primary rRNA transcript to yield the immediate precursors to the large and small rRNAs (23S and 16S). Processes some mRNAs, and tRNAs when they are encoded in the rRNA operon. Processes pre-crRNA and tracrRNA of type II CRISPR loci if present in the organism. In Shewanella woodyi (strain ATCC 51908 / MS32), this protein is Ribonuclease 3.